We begin with the raw amino-acid sequence, 136 residues long: Large ribosomal subunit protein bL17 (136 aa).

This sequence belongs to the bacterial ribosomal protein bL17 family. As to quaternary structure, part of the 50S ribosomal subunit. Contacts protein L32.

In Rhodopseudomonas palustris (strain BisB5), this protein is Large ribosomal subunit protein bL17.